Reading from the N-terminus, the 351-residue chain is Divinyl chlorophyll a/b light-harvesting protein PcbC (351 aa).

6 consecutive transmembrane segments (helical) span residues 27–47 (FIGS…GSTL), 81–101 (GVWT…FSAV), 140–160 (FILG…VEWA), 202–222 (VMSG…WHIA), 242–262 (AVLS…AFWC), and 309–329 (LSNV…WHAL).

This sequence belongs to the PsbB/PsbC family. IsiA/Pcb subfamily. In terms of assembly, the antenna complex consists of divinyl chlorophylls (a and b) and divinyl chlorophyll a/b binding proteins and binds more divinyl chlorophyll b than does the antenna complex from high-light-adapted Prochlorococcus. Divinyl chlorophyll a serves as cofactor. Divinyl chlorophyll b is required as a cofactor.

It is found in the cellular thylakoid membrane. The antenna complex functions as a light receptor, it captures and delivers excitation energy to photosystems II and I. The Prochlorales pcb genes are not related to higher plant LHCs. This Prochlorococcus marinus (strain NATL2A) protein is Divinyl chlorophyll a/b light-harvesting protein PcbC (pcbC).